Here is a 458-residue protein sequence, read N- to C-terminus: Ammonium transporter Rh type B (458 aa).

Residues 1–11 are Cytoplasmic-facing; that stretch reads MTDAATNMRLK. A helical transmembrane segment spans residues 12–32; sequence LPITCFILEIILIILFGTLVQ. Residues 33-58 are Extracellular-facing; the sequence is YDYETDAKEWHNTSHQDYENDFYFRY. Residue N44 is glycosylated (N-linked (GlcNAc...) asparagine). A helical transmembrane segment spans residues 59 to 79; that stretch reads PSFQDVHVMIFVGFGFLMTFL. At 80–83 the chain is on the cytoplasmic side; that stretch reads QRYG. A helical transmembrane segment spans residues 84–104; that stretch reads FGSVGFNFLIAAFSLQWATLM. Over 105 to 121 the chain is Extracellular; the sequence is QGFFHGMHGGKIHIGVE. The helical transmembrane segment at 122–142 threads the bilayer; that stretch reads SMINADFCTGSVLISFGAVLG. Residues 143–151 lie on the Cytoplasmic side of the membrane; that stretch reads KTSPIQLLT. Residues 152-172 traverse the membrane as a helical segment; the sequence is MAIFEVTLFAVNEFILLSLLG. Residues 173-176 lie on the Extracellular side of the membrane; the sequence is TKDA. Residues 177–197 traverse the membrane as a helical segment; sequence GGSMTIHTFGAYFGLMVTRIL. Residues 198–216 lie on the Cytoplasmic side of the membrane; sequence YRPNLDKSKHRNSSVYHSD. A helical membrane pass occupies residues 217 to 237; that stretch reads LFAMIGTVYLWMFWPSFNSAI. Topologically, residues 238-247 are extracellular; it reads TAHGDDQHRT. The chain crosses the membrane as a helical span at residues 248–270; the sequence is ALNTYYSLAACTLATYGMSAITS. At 271–274 the chain is on the cytoplasmic side; sequence HDGK. A helical transmembrane segment spans residues 275–295; the sequence is LDMVHIQNAALAGGVAVGTAG. At 296–298 the chain is on the extracellular side; the sequence is EMM. A helical membrane pass occupies residues 299 to 319; it reads LTPFGSMIVGFMAGIISVLGF. The Cytoplasmic segment spans residues 320 to 340; the sequence is KFLSPILEDKLKIQDTCGIHN. A helical membrane pass occupies residues 341-361; it reads LHGMPGVLGAIVGAVTAALAT. Topologically, residues 362–391 are extracellular; it reads TDVYGQGMADVFPAVADGSVNATKQGGIQA. A helical transmembrane segment spans residues 392–412; that stretch reads LSLAITLGIAVLGGLIVGFVL. The Cytoplasmic portion of the chain corresponds to 413 to 458; sequence KLPVFGTPPDTLCFEDSVYWEVPGSESPEEGELTSVKPEETEHLNS. The tract at residues 436 to 458 is disordered; the sequence is GSESPEEGELTSVKPEETEHLNS. The segment covering 449-458 has biased composition (basic and acidic residues); the sequence is KPEETEHLNS.

Belongs to the ammonium transporter (TC 2.A.49) family. Rh subfamily. Specifically expressed in the gill by pavement cells (at protein level).

Its subcellular location is the apicolateral cell membrane. The protein resides in the cytoplasmic vesicle membrane. Its function is as follows. Functions as an ammonia transporter. May play a role in the elimination of ammonia in the gill. The polypeptide is Ammonium transporter Rh type B (rhbg) (Takifugu rubripes (Japanese pufferfish)).